The chain runs to 470 residues: Uronate isomerase (470 aa).

Belongs to the metallo-dependent hydrolases superfamily. Uronate isomerase family.

It catalyses the reaction D-glucuronate = D-fructuronate. The catalysed reaction is aldehydo-D-galacturonate = keto-D-tagaturonate. It functions in the pathway carbohydrate metabolism; pentose and glucuronate interconversion. In Klebsiella pneumoniae (strain 342), this protein is Uronate isomerase.